The following is a 172-amino-acid chain: Small ribosomal subunit protein uS5 (172 aa).

The region spanning 16–79 is the S5 DRBM domain; the sequence is LKDRLVAINR…ESAKKNLVKV (64 aa).

The protein belongs to the universal ribosomal protein uS5 family. Part of the 30S ribosomal subunit. Contacts proteins S4 and S8.

Its function is as follows. With S4 and S12 plays an important role in translational accuracy. Functionally, located at the back of the 30S subunit body where it stabilizes the conformation of the head with respect to the body. This is Small ribosomal subunit protein uS5 from Bacteroides thetaiotaomicron (strain ATCC 29148 / DSM 2079 / JCM 5827 / CCUG 10774 / NCTC 10582 / VPI-5482 / E50).